The following is a 739-amino-acid chain: Probable beta-glucosidase L (739 aa).

Positions 1–17 (MQNLFLSLLAAAVTVHA) are cleaved as a signal peptide. Residue Asn224 is glycosylated (N-linked (GlcNAc...) asparagine). Asp252 is an active-site residue. An N-linked (GlcNAc...) asparagine glycan is attached at Asn398.

This sequence belongs to the glycosyl hydrolase 3 family.

Its subcellular location is the secreted. It carries out the reaction Hydrolysis of terminal, non-reducing beta-D-glucosyl residues with release of beta-D-glucose.. The protein operates within glycan metabolism; cellulose degradation. Functionally, beta-glucosidases are one of a number of cellulolytic enzymes involved in the degradation of cellulosic biomass. Catalyzes the last step releasing glucose from the inhibitory cellobiose. The polypeptide is Probable beta-glucosidase L (bglL) (Neosartorya fischeri (strain ATCC 1020 / DSM 3700 / CBS 544.65 / FGSC A1164 / JCM 1740 / NRRL 181 / WB 181) (Aspergillus fischerianus)).